The sequence spans 370 residues: Glutamate 5-kinase (370 aa).

Lys17 is an ATP binding site. Substrate-binding residues include Ser57, Asp144, and Asn156. ATP contacts are provided by residues 176–177 (SD) and 220–226 (TGGMVSK). Residues 282 to 360 (SGTLTLDDGA…SDLPAEMRRP (79 aa)) enclose the PUA domain.

It belongs to the glutamate 5-kinase family.

It localises to the cytoplasm. The enzyme catalyses L-glutamate + ATP = L-glutamyl 5-phosphate + ADP. Its pathway is amino-acid biosynthesis; L-proline biosynthesis; L-glutamate 5-semialdehyde from L-glutamate: step 1/2. Its function is as follows. Catalyzes the transfer of a phosphate group to glutamate to form L-glutamate 5-phosphate. This is Glutamate 5-kinase from Mycolicibacterium gilvum (strain PYR-GCK) (Mycobacterium gilvum (strain PYR-GCK)).